A 136-amino-acid polypeptide reads, in one-letter code: Large ribosomal subunit protein uL22 (136 aa).

It belongs to the universal ribosomal protein uL22 family. In terms of assembly, part of the 50S ribosomal subunit.

In terms of biological role, this protein binds specifically to 23S rRNA; its binding is stimulated by other ribosomal proteins, e.g. L4, L17, and L20. It is important during the early stages of 50S assembly. It makes multiple contacts with different domains of the 23S rRNA in the assembled 50S subunit and ribosome. Functionally, the globular domain of the protein is located near the polypeptide exit tunnel on the outside of the subunit, while an extended beta-hairpin is found that lines the wall of the exit tunnel in the center of the 70S ribosome. This is Large ribosomal subunit protein uL22 from Leifsonia xyli subsp. xyli (strain CTCB07).